Reading from the N-terminus, the 195-residue chain is N-(5'-phosphoribosyl)anthranilate isomerase (195 aa).

Belongs to the TrpF family.

It catalyses the reaction N-(5-phospho-beta-D-ribosyl)anthranilate = 1-(2-carboxyphenylamino)-1-deoxy-D-ribulose 5-phosphate. It functions in the pathway amino-acid biosynthesis; L-tryptophan biosynthesis; L-tryptophan from chorismate: step 3/5. The polypeptide is N-(5'-phosphoribosyl)anthranilate isomerase (Streptococcus gordonii (strain Challis / ATCC 35105 / BCRC 15272 / CH1 / DL1 / V288)).